A 397-amino-acid chain; its full sequence is Bifunctional enzyme IspD/IspF (397 aa).

Positions Met-1–Ile-236 are 2-C-methyl-D-erythritol 4-phosphate cytidylyltransferase. The tract at residues Arg-237–Lys-397 is 2-C-methyl-D-erythritol 2,4-cyclodiphosphate synthase. A divalent metal cation contacts are provided by Asp-243 and His-245. 4-CDP-2-C-methyl-D-erythritol 2-phosphate is bound by residues Asp-243–His-245 and His-269–Ser-270. His-277 is a binding site for a divalent metal cation. Residues Asp-291–Gly-293, Thr-367–Glu-370, Phe-374, and Arg-377 each bind 4-CDP-2-C-methyl-D-erythritol 2-phosphate.

It in the N-terminal section; belongs to the IspD/TarI cytidylyltransferase family. IspD subfamily. This sequence in the C-terminal section; belongs to the IspF family. A divalent metal cation serves as cofactor.

It catalyses the reaction 2-C-methyl-D-erythritol 4-phosphate + CTP + H(+) = 4-CDP-2-C-methyl-D-erythritol + diphosphate. It carries out the reaction 4-CDP-2-C-methyl-D-erythritol 2-phosphate = 2-C-methyl-D-erythritol 2,4-cyclic diphosphate + CMP. The protein operates within isoprenoid biosynthesis; isopentenyl diphosphate biosynthesis via DXP pathway; isopentenyl diphosphate from 1-deoxy-D-xylulose 5-phosphate: step 2/6. It functions in the pathway isoprenoid biosynthesis; isopentenyl diphosphate biosynthesis via DXP pathway; isopentenyl diphosphate from 1-deoxy-D-xylulose 5-phosphate: step 4/6. Its function is as follows. Bifunctional enzyme that catalyzes the formation of 4-diphosphocytidyl-2-C-methyl-D-erythritol from CTP and 2-C-methyl-D-erythritol 4-phosphate (MEP) (IspD), and catalyzes the conversion of 4-diphosphocytidyl-2-C-methyl-D-erythritol 2-phosphate (CDP-ME2P) to 2-C-methyl-D-erythritol 2,4-cyclodiphosphate (ME-CPP) with a corresponding release of cytidine 5-monophosphate (CMP) (IspF). The chain is Bifunctional enzyme IspD/IspF from Bartonella henselae (strain ATCC 49882 / DSM 28221 / CCUG 30454 / Houston 1) (Rochalimaea henselae).